Consider the following 486-residue polypeptide: Probable glycine dehydrogenase (decarboxylating) subunit 2 (486 aa).

Residue lysine 269 is modified to N6-(pyridoxal phosphate)lysine.

It belongs to the GcvP family. C-terminal subunit subfamily. As to quaternary structure, the glycine cleavage system is composed of four proteins: P, T, L and H. In this organism, the P 'protein' is a heterodimer of two subunits. Pyridoxal 5'-phosphate is required as a cofactor.

It carries out the reaction N(6)-[(R)-lipoyl]-L-lysyl-[glycine-cleavage complex H protein] + glycine + H(+) = N(6)-[(R)-S(8)-aminomethyldihydrolipoyl]-L-lysyl-[glycine-cleavage complex H protein] + CO2. Functionally, the glycine cleavage system catalyzes the degradation of glycine. The P protein binds the alpha-amino group of glycine through its pyridoxal phosphate cofactor; CO(2) is released and the remaining methylamine moiety is then transferred to the lipoamide cofactor of the H protein. This chain is Probable glycine dehydrogenase (decarboxylating) subunit 2, found in Chlorobaculum tepidum (strain ATCC 49652 / DSM 12025 / NBRC 103806 / TLS) (Chlorobium tepidum).